A 417-amino-acid chain; its full sequence is Guanine nucleotide-exchange factor SEC12 (417 aa).

Topologically, residues 1-388 are cytoplasmic; the sequence is MGRRRGVELY…QLHLLPSRRS (388 aa). Residue Tyr-10 is modified to 3'-nitrotyrosine. A disordered region spans residues 101 to 135; sequence KGSKAEKSGSKEQGPRQRKGAAPAEKKSGAEVHPE. Composition is skewed to basic and acidic residues over residues 103-115 and 124-135; these read SKAEKSGSKEQGP and AEKKSGAEVHPE. WD repeat units follow at residues 152–191, 194–232, and 298–337; these read STEPLQKVVCFNHDNTLLATGGSDGHVRVWKVPSLEKVLE, AHEGEIGDLALGPDGKLVTVGWDFKASVWQKDQLVTQLQ, and CGHEVISCLTVSESGTFLGLGTVTGSVAIYIAFSLQRLYY. Residues 389 to 409 form a helical membrane-spanning segment; sequence VPVWLLLLLCVGLIIVTILLL. The Lumenal segment spans residues 410–417; the sequence is QSAFPGFL.

Interacts with SAR1B (GDP-bound form). Interacts with MIA2; recruits PREB to endoplasmic reticulum exit sites. Interacts with CIDEB; facilitating loading of SCAP-SREBP into COPII vesicles.

It is found in the endoplasmic reticulum membrane. The protein resides in the nucleus. Functionally, guanine nucleotide exchange factor (GEF) that regulates the assembly of the coat protein complex II/COPII in endoplasmic reticulum (ER) to Golgi vesicle-mediated transport. Selectively activates SAR1A and SAR1B by promoting the exchange of guanosine diphosphate (GDP) for guanosine triphosphate (GTP) in these small GTPases. In their activated GTP-bound state, SAR1A and SAR1B insert into the membrane of the endoplasmic reticulum where they recruit the remainder of the coat protein complex II/COPII which is responsible for both the sorting of proteins and the deformation and budding of membranes into vesicles destined to the Golgi. In terms of biological role, was first identified based on its probable role in the regulation of pituitary gene transcription. Binds to the prolactin gene (PRL) promoter and seems to activate transcription. This Rattus norvegicus (Rat) protein is Guanine nucleotide-exchange factor SEC12.